Here is a 454-residue protein sequence, read N- to C-terminus: Enolase (454 aa).

Residue Gln-167 coordinates (2R)-2-phosphoglycerate. The active-site Proton donor is Glu-209. Residues Asp-250, Glu-312, and Asp-339 each coordinate Mg(2+). (2R)-2-phosphoglycerate is bound by residues Lys-364, Arg-393, Ser-394, and Lys-415. Lys-364 acts as the Proton acceptor in catalysis.

This sequence belongs to the enolase family. Mg(2+) is required as a cofactor.

The protein resides in the cytoplasm. It localises to the secreted. The protein localises to the cell surface. It carries out the reaction (2R)-2-phosphoglycerate = phosphoenolpyruvate + H2O. It functions in the pathway carbohydrate degradation; glycolysis; pyruvate from D-glyceraldehyde 3-phosphate: step 4/5. Functionally, catalyzes the reversible conversion of 2-phosphoglycerate (2-PG) into phosphoenolpyruvate (PEP). It is essential for the degradation of carbohydrates via glycolysis. This is Enolase from Mycoplasmopsis agalactiae (strain NCTC 10123 / CIP 59.7 / PG2) (Mycoplasma agalactiae).